The primary structure comprises 204 residues: Peptide deformylase (204 aa).

Residues C131 and H174 each coordinate Fe cation. Residue E175 is part of the active site. Residue H178 participates in Fe cation binding.

This sequence belongs to the polypeptide deformylase family. Fe(2+) is required as a cofactor.

The catalysed reaction is N-terminal N-formyl-L-methionyl-[peptide] + H2O = N-terminal L-methionyl-[peptide] + formate. Removes the formyl group from the N-terminal Met of newly synthesized proteins. Requires at least a dipeptide for an efficient rate of reaction. N-terminal L-methionine is a prerequisite for activity but the enzyme has broad specificity at other positions. The chain is Peptide deformylase from Streptococcus pyogenes serotype M49 (strain NZ131).